Reading from the N-terminus, the 238-residue chain is 15,16-dihydrobiliverdin:ferredoxin oxidoreductase (238 aa).

Belongs to the HY2 family.

It carries out the reaction 15,16-dihydrobiliverdin + oxidized 2[4Fe-4S]-[ferredoxin] = biliverdin IXalpha + reduced 2[4Fe-4S]-[ferredoxin] + 2 H(+). Its function is as follows. Catalyzes the two-electron reduction of biliverdin IX-alpha at the C15 methine bridge. This chain is 15,16-dihydrobiliverdin:ferredoxin oxidoreductase, found in Prochlorococcus marinus (strain NATL1A).